Consider the following 353-residue polypeptide: Protein-glutamate methylesterase/protein-glutamine glutaminase (353 aa).

Positions 6–123 (RVLVIDDSAL…ARGLKAMLSE (118 aa)) constitute a Response regulatory domain. Residue D57 is modified to 4-aspartylphosphate. In terms of domain architecture, CheB-type methylesterase spans 159-351 (AESTDKVIAI…PRIVDLLSER (193 aa)). Active-site residues include S171, H197, and D293.

The protein belongs to the CheB family. Phosphorylated by CheA. Phosphorylation of the N-terminal regulatory domain activates the methylesterase activity.

Its subcellular location is the cytoplasm. The catalysed reaction is [protein]-L-glutamate 5-O-methyl ester + H2O = L-glutamyl-[protein] + methanol + H(+). It carries out the reaction L-glutaminyl-[protein] + H2O = L-glutamyl-[protein] + NH4(+). Its function is as follows. Involved in chemotaxis. Part of a chemotaxis signal transduction system that modulates chemotaxis in response to various stimuli. Catalyzes the demethylation of specific methylglutamate residues introduced into the chemoreceptors (methyl-accepting chemotaxis proteins or MCP) by CheR. Also mediates the irreversible deamidation of specific glutamine residues to glutamic acid. The sequence is that of Protein-glutamate methylesterase/protein-glutamine glutaminase from Syntrophotalea carbinolica (strain DSM 2380 / NBRC 103641 / GraBd1) (Pelobacter carbinolicus).